Here is a 91-residue protein sequence, read N- to C-terminus: Small ribosomal subunit protein uS19 (91 aa).

Belongs to the universal ribosomal protein uS19 family.

Functionally, protein S19 forms a complex with S13 that binds strongly to the 16S ribosomal RNA. This is Small ribosomal subunit protein uS19 from Delftia acidovorans (strain DSM 14801 / SPH-1).